Here is a 178-residue protein sequence, read N- to C-terminus: MSSEEDDAISLISVLGLAVFIGLCILLVVLIATSALILVIYVIIDCILRPFLGTCLDLDLEIGVQRGQQRARIVTYHTIISTGLRLPDFEREGKKRGLKQSVIETLLPKLLVGQGNHEEDEEKSLESRECAICLSGYVVNEECRVFPVCRHIYHALCIDAWLKNHLTCPTCRKDLPES.

The helical transmembrane segment at 11–31 (LISVLGLAVFIGLCILLVVLI) threads the bilayer. The RING-type; atypical zinc-finger motif lies at 130-172 (CAICLSGYVVNEECRVFPVCRHIYHALCIDAWLKNHLTCPTCR).

It belongs to the RING-type zinc finger family. ATL subfamily.

Its subcellular location is the membrane. It catalyses the reaction S-ubiquitinyl-[E2 ubiquitin-conjugating enzyme]-L-cysteine + [acceptor protein]-L-lysine = [E2 ubiquitin-conjugating enzyme]-L-cysteine + N(6)-ubiquitinyl-[acceptor protein]-L-lysine.. The protein operates within protein modification; protein ubiquitination. The protein is Putative RING-H2 finger protein ATL19 (ATL19) of Arabidopsis thaliana (Mouse-ear cress).